The chain runs to 231 residues: Flagellar L-ring protein (231 aa).

An N-terminal signal peptide occupies residues Met1 to Gly18. Cys19 is lipidated: N-palmitoyl cysteine. The S-diacylglycerol cysteine moiety is linked to residue Cys19. Positions Leu118–Ser141 are disordered.

It belongs to the FlgH family. In terms of assembly, the basal body constitutes a major portion of the flagellar organelle and consists of four rings (L,P,S, and M) mounted on a central rod.

Its subcellular location is the cell outer membrane. The protein resides in the bacterial flagellum basal body. Functionally, assembles around the rod to form the L-ring and probably protects the motor/basal body from shearing forces during rotation. In Pseudomonas paraeruginosa (strain DSM 24068 / PA7) (Pseudomonas aeruginosa (strain PA7)), this protein is Flagellar L-ring protein.